We begin with the raw amino-acid sequence, 113 residues long: Single-stranded DNA-binding protein B (113 aa).

An SSB domain is found at 1–104; it reads MFNQVMLVGR…VLADTVRFMD (104 aa). Tyr82 is subject to Phosphotyrosine.

As to quaternary structure, homotetramer. Post-translationally, phosphorylated by YwqD, which increases ssDNA affinity; dephosphorylated by YwqE.

The protein localises to the cytoplasm. Its function is as follows. Not essential for replication of the chromosome, but is required for optimal competence. Binds ssDNA, binding is facilitated by DprA, acts as an accessory factor for homologous DNA strand exchange. This chain is Single-stranded DNA-binding protein B (ssbB), found in Bacillus subtilis (strain 168).